The sequence spans 564 residues: Kelch-like protein 12 (564 aa).

A BTB domain is found at 29–96 (CDITLRVEGT…VYTETVLVTV (68 aa)). The BACK domain occupies 131 to 232 (CLGIRDFAET…LTPRYITDVI (102 aa)). 6 Kelch repeats span residues 278 to 325 (VLLV…ALND), 327 to 375 (VYVI…TLGD), 376 to 422 (MIYV…VASG), 423 to 469 (LIYC…LLND), 471 to 516 (IYVV…VLRG), and 518 to 563 (LYAI…VLRE).

In terms of assembly, component of the BCR(KLHL12) E3 ubiquitin ligase complex.

Its subcellular location is the cytoplasmic vesicle. It is found in the COPII-coated vesicle. It participates in protein modification; protein ubiquitination. Functionally, substrate-specific adapter of a BCR (BTB-CUL3-RBX1) E3 ubiquitin ligase complex that acts as a negative regulator of Wnt signaling pathway and ER-Golgi transport. The BCR(KLHL12) complex is involved in ER-Golgi transport by regulating the size of COPII coats, thereby playing a key role in collagen export, which is required for embryonic stem (ES) cells division. Negatively regulates the Wnt signaling pathway, possibly via the targeted ubiquitination and subsequent proteolysis of dvl2 and dvl3. Regulates convergent-extension movements during early embryonic development. This chain is Kelch-like protein 12 (klhl12), found in Danio rerio (Zebrafish).